The primary structure comprises 1107 residues: uncharacterized protein (1107 aa).

Residues 180–204 show a composition bias toward low complexity; it reads SGNGSSGGNNNNNNNSLNNSNNSIG. Disordered stretches follow at residues 180 to 251 and 501 to 530; these read SGNG…SGNN and LMNI…DNQM. Over residues 205-215 the composition is skewed to gly residues; the sequence is SSGGNGGGGSN. Residues 219–237 are compositionally biased toward polar residues; it reads PSMSPQFTSISKTNSPQII. Low complexity-rich tracts occupy residues 238–251 and 501–521; these read NTSS…SGNN and LMNI…NNND. 2 coiled-coil regions span residues 789-816 and 940-1012; these read KKDI…IYRE and NIDH…NMLK.

This is an uncharacterized protein from Dictyostelium discoideum (Social amoeba).